We begin with the raw amino-acid sequence, 106 residues long: MECRFFISIILFVVLLNPSLIINMVLGYVLGSLFRSNYSRLKKLLSGNKNENREEEDEHISQMKNPFEDAESDVLQHLKTLGLETKVEGDDLEYLQRLWESMSSKK.

A helical transmembrane segment spans residues 5-25 (FFISIILFVVLLNPSLIINMV).

The protein belongs to the nanovirus U4 protein family.

It localises to the membrane. This chain is Protein U4 (DNA-U4), found in Cicer arietinum (Chickpea).